A 157-amino-acid chain; its full sequence is 2-C-methyl-D-erythritol 2,4-cyclodiphosphate synthase (157 aa).

The a divalent metal cation site is built by aspartate 8 and histidine 10. 4-CDP-2-C-methyl-D-erythritol 2-phosphate is bound by residues 8 to 10 and 34 to 35; these read DVH and HS. Histidine 42 contributes to the a divalent metal cation binding site. 4-CDP-2-C-methyl-D-erythritol 2-phosphate contacts are provided by residues 56–58, 61–65, 132–135, phenylalanine 139, and arginine 142; these read DIG, FPDTD, and TTTE.

This sequence belongs to the IspF family. Homotrimer. The cofactor is a divalent metal cation.

The enzyme catalyses 4-CDP-2-C-methyl-D-erythritol 2-phosphate = 2-C-methyl-D-erythritol 2,4-cyclic diphosphate + CMP. The protein operates within isoprenoid biosynthesis; isopentenyl diphosphate biosynthesis via DXP pathway; isopentenyl diphosphate from 1-deoxy-D-xylulose 5-phosphate: step 4/6. Its function is as follows. Involved in the biosynthesis of isopentenyl diphosphate (IPP) and dimethylallyl diphosphate (DMAPP), two major building blocks of isoprenoid compounds. Catalyzes the conversion of 4-diphosphocytidyl-2-C-methyl-D-erythritol 2-phosphate (CDP-ME2P) to 2-C-methyl-D-erythritol 2,4-cyclodiphosphate (ME-CPP) with a corresponding release of cytidine 5-monophosphate (CMP). The sequence is that of 2-C-methyl-D-erythritol 2,4-cyclodiphosphate synthase from Geotalea uraniireducens (strain Rf4) (Geobacter uraniireducens).